Reading from the N-terminus, the 232-residue chain is Lipoprotein-releasing system ATP-binding protein LolD (232 aa).

The region spanning 11-231 is the ABC transporter domain; the sequence is VYLHDIKREY…SLENGHVVEL (221 aa). 47-54 lines the ATP pocket; it reads APSGSGKS.

Belongs to the ABC transporter superfamily. Lipoprotein translocase (TC 3.A.1.125) family. As to quaternary structure, the complex is composed of two ATP-binding proteins (LolD) and two transmembrane proteins (LolC and LolE).

The protein resides in the cell inner membrane. Functionally, part of the ABC transporter complex LolCDE involved in the translocation of mature outer membrane-directed lipoproteins, from the inner membrane to the periplasmic chaperone, LolA. Responsible for the formation of the LolA-lipoprotein complex in an ATP-dependent manner. The chain is Lipoprotein-releasing system ATP-binding protein LolD from Nitrobacter winogradskyi (strain ATCC 25391 / DSM 10237 / CIP 104748 / NCIMB 11846 / Nb-255).